We begin with the raw amino-acid sequence, 72 residues long: MSKDDVIEMQGTVLESLPNAMFEVELESGHKIIAHISGKLRMNFIRILPGDKVTVELSPYDLTRGRITWRAK.

One can recognise an S1-like domain in the interval 1-72 (MSKDDVIEMQ…TRGRITWRAK (72 aa)).

The protein belongs to the IF-1 family. In terms of assembly, component of the 30S ribosomal translation pre-initiation complex which assembles on the 30S ribosome in the order IF-2 and IF-3, IF-1 and N-formylmethionyl-tRNA(fMet); mRNA recruitment can occur at any time during PIC assembly.

The protein localises to the cytoplasm. One of the essential components for the initiation of protein synthesis. Stabilizes the binding of IF-2 and IF-3 on the 30S subunit to which N-formylmethionyl-tRNA(fMet) subsequently binds. Helps modulate mRNA selection, yielding the 30S pre-initiation complex (PIC). Upon addition of the 50S ribosomal subunit IF-1, IF-2 and IF-3 are released leaving the mature 70S translation initiation complex. The sequence is that of Translation initiation factor IF-1 from Clostridium botulinum (strain ATCC 19397 / Type A).